A 325-amino-acid polypeptide reads, in one-letter code: MQTSLLKPKIIAVESLGENHAKVVMEPFERGYGHTLGNALRRVLLSSMVGYAPTEVTIAGVVHEYSTLDGVQEDVVNLLLNLKGVVFKLHNRDEVTVTLRKEGEGVVTAGDIELAHDCEVINPNHVIAHLSKGGKLDVQIKVEKGRGYVPGNVRRYGDETAKIIGRIVLDASFSPVRRVSYTVESARVEQRTDLDKLVMNIETSGVITPEEAIRQSARILVDQLSVFAALEGTETAAEAPSRAPQIDPILLRPVDDLELTVRSANCLKAENIYYIGDLIQRTENELLKTPNLGRKSLNEIKEVLASRGLTLGMKLENWPPAGLDK.

The tract at residues 1 to 231 (MQTSLLKPKI…DQLSVFAALE (231 aa)) is alpha N-terminal domain (alpha-NTD). An alpha C-terminal domain (alpha-CTD) region spans residues 246-325 (IDPILLRPVD…ENWPPAGLDK (80 aa)).

Belongs to the RNA polymerase alpha chain family. As to quaternary structure, homodimer. The RNAP catalytic core consists of 2 alpha, 1 beta, 1 beta' and 1 omega subunit. When a sigma factor is associated with the core the holoenzyme is formed, which can initiate transcription.

The enzyme catalyses RNA(n) + a ribonucleoside 5'-triphosphate = RNA(n+1) + diphosphate. Its function is as follows. DNA-dependent RNA polymerase catalyzes the transcription of DNA into RNA using the four ribonucleoside triphosphates as substrates. This is DNA-directed RNA polymerase subunit alpha from Burkholderia mallei (strain NCTC 10247).